The primary structure comprises 181 residues: Adenine phosphoribosyltransferase (181 aa).

The protein belongs to the purine/pyrimidine phosphoribosyltransferase family. In terms of assembly, homodimer.

It is found in the cytoplasm. The catalysed reaction is AMP + diphosphate = 5-phospho-alpha-D-ribose 1-diphosphate + adenine. It functions in the pathway purine metabolism; AMP biosynthesis via salvage pathway; AMP from adenine: step 1/1. Functionally, catalyzes a salvage reaction resulting in the formation of AMP, that is energically less costly than de novo synthesis. In Aliivibrio fischeri (strain ATCC 700601 / ES114) (Vibrio fischeri), this protein is Adenine phosphoribosyltransferase.